A 76-amino-acid polypeptide reads, in one-letter code: Immune protein Tsi5 (76 aa).

A run of 2 helical transmembrane segments spans residues 19-39 (LLMT…EWFF) and 43-63 (WVTV…LYLY).

The protein resides in the membrane. In terms of biological role, immunity protein that plays a role in preventing early activation of toxin Tse5. The protein is Immune protein Tsi5 of Pseudomonas aeruginosa (strain ATCC 15692 / DSM 22644 / CIP 104116 / JCM 14847 / LMG 12228 / 1C / PRS 101 / PAO1).